Consider the following 305-residue polypeptide: UDP-3-O-acyl-N-acetylglucosamine deacetylase (305 aa).

Residues His79, His238, and Asp242 each coordinate Zn(2+). The active-site Proton donor is the His265.

Belongs to the LpxC family. It depends on Zn(2+) as a cofactor.

It catalyses the reaction a UDP-3-O-[(3R)-3-hydroxyacyl]-N-acetyl-alpha-D-glucosamine + H2O = a UDP-3-O-[(3R)-3-hydroxyacyl]-alpha-D-glucosamine + acetate. It functions in the pathway glycolipid biosynthesis; lipid IV(A) biosynthesis; lipid IV(A) from (3R)-3-hydroxytetradecanoyl-[acyl-carrier-protein] and UDP-N-acetyl-alpha-D-glucosamine: step 2/6. Catalyzes the hydrolysis of UDP-3-O-myristoyl-N-acetylglucosamine to form UDP-3-O-myristoylglucosamine and acetate, the committed step in lipid A biosynthesis. In Salmonella arizonae (strain ATCC BAA-731 / CDC346-86 / RSK2980), this protein is UDP-3-O-acyl-N-acetylglucosamine deacetylase.